The sequence spans 82 residues: Cytochrome c-551 (82 aa).

Heme c contacts are provided by cysteine 12, cysteine 15, histidine 16, and methionine 61.

Binds 1 heme c group covalently per subunit.

Functionally, this is a prokaryotic monoheme cytochrome, unreactive with mitochondrial cytochrome C oxidase or reductase. It functions in nitrite and nitrate respiration in Pseudomonas, but it is also found in other bacteria. This chain is Cytochrome c-551, found in Ectopseudomonas mendocina (Pseudomonas mendocina).